The chain runs to 232 residues: Secreted LysM effector Mg3LysM (232 aa).

Residues 1-16 (MQNIFLAATLLGAAFA) form the signal peptide. A LysM 1 domain is found at 47-91 (TNYTVKAGDTLGAIAKQYNSGVCDIAKVNGIDNPDYIKPDQVLSI). 6 N-linked (GlcNAc...) asparagine glycosylation sites follow: N48, N100, N138, N195, N209, and N227. LysM domains are found at residues 120–165 (STYT…VINT) and 177–221 (GTYV…IIIL).

It belongs to the secreted LysM effector family.

Functionally, secreted effector that enables the plant pathogenic fungus to manipulate host defenses for successful infection. Binds chitin fragments and blocks the activation of chitin-induced plant defense responses. Protects fungal hyphae against hydrolytic plant enzymes. This chain is Secreted LysM effector Mg3LysM, found in Zymoseptoria tritici (strain CBS 115943 / IPO323) (Speckled leaf blotch fungus).